Consider the following 127-residue polypeptide: MSSTNGNAPATPSSDQNPLPTRFEVELEFIQSLANIQYVTYLLTQQQIWKSPNFKNYLKYLEYWCNPPYSQCIVYPNCLFILKLLNGFMESAIVNEDGLLEGLDELPKIIQLQGPQWMNEMVERWAN.

It belongs to the Mediator complex subunit 31 family. As to quaternary structure, component of the Mediator complex, which is composed of at least 21 subunits that form three structurally distinct submodules. The Mediator head module contains MED6, MED8, MED11, SRB4/MED17, SRB5/MED18, ROX3/MED19, SRB2/MED20 and SRB6/MED22, the middle module contains MED1, MED4, NUT1/MED5, MED7, CSE2/MED9, NUT2/MED10, SRB7/MED21 and SOH1/MED31, and the tail module contains MED2, PGD1/MED3, RGR1/MED14, GAL11/MED15 and SIN4/MED16. The head and the middle modules interact directly with RNA polymerase II, whereas the elongated tail module interacts with gene-specific regulatory proteins.

The protein localises to the nucleus. Component of the Mediator complex, a coactivator involved in the regulated transcription of nearly all RNA polymerase II-dependent genes. Mediator functions as a bridge to convey information from gene-specific regulatory proteins to the basal RNA polymerase II transcription machinery. The Mediator complex, having a compact conformation in its free form, is recruited to promoters by direct interactions with regulatory proteins and serves for the assembly of a functional preinitiation complex with RNA polymerase II and the general transcription factors. The Mediator complex unfolds to an extended conformation and partially surrounds RNA polymerase II, specifically interacting with the unphosphorylated form of the C-terminal domain (CTD) of RNA polymerase II. The Mediator complex dissociates from the RNA polymerase II holoenzyme and stays at the promoter when transcriptional elongation begins. The sequence is that of Mediator of RNA polymerase II transcription subunit 31 (SOH1) from Saccharomyces cerevisiae (strain ATCC 204508 / S288c) (Baker's yeast).